The primary structure comprises 393 residues: Major outer membrane porin, serovar L1 (393 aa).

The first 22 residues, 1–22, serve as a signal peptide directing secretion; sequence MKKLLKSVLVFAALSSASSLQA.

Belongs to the chlamydial porin (CP) (TC 1.B.2) family. Part of a disulfide cross-linked outer membrane complex (COMC) composed of the major outer membrane porin (MOMP), the small cysteine-rich protein (OmcA) and the large cysteine-rich periplasmic protein (OmcB).

It is found in the cell outer membrane. Its function is as follows. In elementary bodies (EBs, the infectious stage, which is able to survive outside the host cell) provides the structural integrity of the outer envelope through disulfide cross-links with the small cysteine-rich protein and the large cysteine-rich periplasmic protein. It has been described in publications as the Sarkosyl-insoluble COMC (Chlamydia outer membrane complex), and serves as the functional equivalent of peptidoglycan. Permits diffusion of specific solutes through the outer membrane. This Chlamydia trachomatis protein is Major outer membrane porin, serovar L1 (ompA).